Here is a 576-residue protein sequence, read N- to C-terminus: DM7 family protein GD16138 (576 aa).

A disordered region spans residues 454–481 (FPELEPDSEPEPEPEPQTEDEGEDEGDK). The segment covering 457-478 (LEPDSEPEPEPEPQTEDEGEDE) has biased composition (acidic residues).

This sequence belongs to the DM7 family.

The chain is DM7 family protein GD16138 from Drosophila simulans (Fruit fly).